The sequence spans 188 residues: Ribosomal RNA small subunit methyltransferase G (188 aa).

S-adenosyl-L-methionine contacts are provided by residues glycine 69, phenylalanine 74, 119 to 120 (VQ), and arginine 134.

Belongs to the methyltransferase superfamily. RNA methyltransferase RsmG family.

It localises to the cytoplasm. The catalysed reaction is guanosine(527) in 16S rRNA + S-adenosyl-L-methionine = N(7)-methylguanosine(527) in 16S rRNA + S-adenosyl-L-homocysteine. Specifically methylates the N7 position of guanine in position 527 of 16S rRNA. The protein is Ribosomal RNA small subunit methyltransferase G of Campylobacter jejuni subsp. jejuni serotype O:2 (strain ATCC 700819 / NCTC 11168).